The primary structure comprises 241 residues: Proteasome subunit alpha (241 aa).

Belongs to the peptidase T1A family. As to quaternary structure, the 20S proteasome core is composed of 14 alpha and 14 beta subunits that assemble into four stacked heptameric rings, resulting in a barrel-shaped structure. The two inner rings, each composed of seven catalytic beta subunits, are sandwiched by two outer rings, each composed of seven alpha subunits. The catalytic chamber with the active sites is on the inside of the barrel. Has a gated structure, the ends of the cylinder being occluded by the N-termini of the alpha-subunits. Is capped by the proteasome-associated ATPase, ARC.

The protein resides in the cytoplasm. It functions in the pathway protein degradation; proteasomal Pup-dependent pathway. The formation of the proteasomal ATPase ARC-20S proteasome complex, likely via the docking of the C-termini of ARC into the intersubunit pockets in the alpha-rings, may trigger opening of the gate for substrate entry. Interconversion between the open-gate and close-gate conformations leads to a dynamic regulation of the 20S proteasome proteolysis activity. Component of the proteasome core, a large protease complex with broad specificity involved in protein degradation. This Frankia alni (strain DSM 45986 / CECT 9034 / ACN14a) protein is Proteasome subunit alpha.